The primary structure comprises 375 residues: Chaperone protein DnaJ (375 aa).

A J domain is found at 5–70 (DYYEILGVSK…QKRAAYDQYG (66 aa)). A CR-type zinc finger spans residues 130-208 (GVTKEIRIPT…CHGHGRVEKS (79 aa)). The Zn(2+) site is built by Cys-143, Cys-146, Cys-160, Cys-163, Cys-182, Cys-185, Cys-196, and Cys-199. CXXCXGXG motif repeat units follow at residues 143 to 150 (CDVCHGSG), 160 to 167 (CPTCHGSG), 182 to 189 (CPHCQGRG), and 196 to 203 (CHKCHGHG).

Belongs to the DnaJ family. As to quaternary structure, homodimer. It depends on Zn(2+) as a cofactor.

The protein resides in the cytoplasm. Participates actively in the response to hyperosmotic and heat shock by preventing the aggregation of stress-denatured proteins and by disaggregating proteins, also in an autonomous, DnaK-independent fashion. Unfolded proteins bind initially to DnaJ; upon interaction with the DnaJ-bound protein, DnaK hydrolyzes its bound ATP, resulting in the formation of a stable complex. GrpE releases ADP from DnaK; ATP binding to DnaK triggers the release of the substrate protein, thus completing the reaction cycle. Several rounds of ATP-dependent interactions between DnaJ, DnaK and GrpE are required for fully efficient folding. Also involved, together with DnaK and GrpE, in the DNA replication of plasmids through activation of initiation proteins. This chain is Chaperone protein DnaJ, found in Salmonella paratyphi A (strain ATCC 9150 / SARB42).